We begin with the raw amino-acid sequence, 887 residues long: Valine--tRNA ligase (887 aa).

Residues 48-58 (PNVTGVLHVGH) carry the 'HIGH' region motif. The 'KMSKS' region signature appears at 527-531 (KMSKS). An ATP-binding site is contributed by lysine 530. Positions 814–887 (LAGLVDIEAE…EASDRLKKLS (74 aa)) form a coiled coil.

This sequence belongs to the class-I aminoacyl-tRNA synthetase family. ValS type 1 subfamily. In terms of assembly, monomer.

It is found in the cytoplasm. The catalysed reaction is tRNA(Val) + L-valine + ATP = L-valyl-tRNA(Val) + AMP + diphosphate. Functionally, catalyzes the attachment of valine to tRNA(Val). As ValRS can inadvertently accommodate and process structurally similar amino acids such as threonine, to avoid such errors, it has a 'posttransfer' editing activity that hydrolyzes mischarged Thr-tRNA(Val) in a tRNA-dependent manner. This Desulfotalea psychrophila (strain LSv54 / DSM 12343) protein is Valine--tRNA ligase.